The following is an 877-amino-acid chain: Leucine--tRNA ligase (877 aa).

Residues 43 to 53 (PYPSGRIHMGH) carry the 'HIGH' region motif. The short motif at 628 to 632 (KMSKS) is the 'KMSKS' region element. Lysine 631 lines the ATP pocket.

Belongs to the class-I aminoacyl-tRNA synthetase family.

The protein resides in the cytoplasm. It carries out the reaction tRNA(Leu) + L-leucine + ATP = L-leucyl-tRNA(Leu) + AMP + diphosphate. The protein is Leucine--tRNA ligase of Brucella anthropi (strain ATCC 49188 / DSM 6882 / CCUG 24695 / JCM 21032 / LMG 3331 / NBRC 15819 / NCTC 12168 / Alc 37) (Ochrobactrum anthropi).